A 469-amino-acid chain; its full sequence is MTAQTLYDKLWNSHVVREEGDGTVLLYIDRHLVHEVTSPQAFEGLKMAGRKLWRIDSVVSTADHNTPTGDWDKGIQDPISKLQVDTLDQNIKEFGALAYFPFMDKGQGIVHVMGPEQGATLPGMTVVCGDSHTSTHGAFGALAHGIGTSEVEHTMATQCITAKKSKSMLIAADGKLKAGVTAKDVALYIIGQIGTAGGTGYAVEFGGEAIRSLSMEGRMTLCNMAIEAGARSGMVAVDQTTIDYVKGKPFAPEGEAWDKAVEYWRTLVSDEGAVFDKEYRFNAEDIEPQVTWGTSPEMVLNIGGKVPNPAEETDPVKRSGIERALEYMGLKAGTPLNEIPVDIVFIGSCTNSRIEDLREAAAIAKGHKKAGNVQRVLIVPGSGLVKEQAEKEGLDKIFIEAGFEWREPGCSMCLAMNADRLAPRQRCASTSNRNFEGRQGNGGRTHLVSPAMAAAAAVTGHFTDIRTMA.

[4Fe-4S] cluster is bound by residues cysteine 349, cysteine 410, and cysteine 413.

Belongs to the aconitase/IPM isomerase family. LeuC type 1 subfamily. As to quaternary structure, heterodimer of LeuC and LeuD. Requires [4Fe-4S] cluster as cofactor.

The catalysed reaction is (2R,3S)-3-isopropylmalate = (2S)-2-isopropylmalate. Its pathway is amino-acid biosynthesis; L-leucine biosynthesis; L-leucine from 3-methyl-2-oxobutanoate: step 2/4. Its function is as follows. Catalyzes the isomerization between 2-isopropylmalate and 3-isopropylmalate, via the formation of 2-isopropylmaleate. This is 3-isopropylmalate dehydratase large subunit from Neisseria gonorrhoeae (strain ATCC 700825 / FA 1090).